A 162-amino-acid polypeptide reads, in one-letter code: Protein A49 (162 aa).

Belongs to the poxviridae A49 protein family.

In Variola virus (isolate Human/India/Ind3/1967) (VARV), this protein is Protein A49.